A 255-amino-acid polypeptide reads, in one-letter code: Dehydrogenase/reductase SDR family member 11 (255 aa).

The N-terminal stretch at 1–25 is a signal peptide; sequence MERWRDRLALVTGASGGIGAAVARA. Residues 13–18, 38–39, glutamate 44, 65–66, and asparagine 92 contribute to the NADP(+) site; these read GASGGI, RT, and DL. Residues serine 146 and tyrosine 161 each coordinate substrate. NADP(+)-binding positions include tyrosine 161, lysine 165, 196–199, and lysine 203; that span reads VETQ. Tyrosine 161 (proton acceptor) is an active-site residue.

The protein belongs to the short-chain dehydrogenases/reductases (SDR) family.

It is found in the secreted. The catalysed reaction is a 3beta-hydroxysteroid + NADP(+) = a 3-oxosteroid + NADPH + H(+). The enzyme catalyses 17beta-estradiol + NAD(+) = estrone + NADH + H(+). It carries out the reaction 17beta-estradiol + NADP(+) = estrone + NADPH + H(+). The protein operates within steroid biosynthesis; estrogen biosynthesis. Its activity is regulated as follows. Inhibited by flavonoids including apigenin, luteolin, genistein, kaempferol and quercetin and also by carbenoxolone, zearalenone, glycyrrhetinic, curcumin and flufenamic acid. Catalyzes the conversion of the 17-keto group of estrone, 4- and 5-androstenes and 5-alpha-androstanes into their 17-beta-hydroxyl metabolites and the conversion of the 3-keto group of 3-, 3,17- and 3,20- diketosteroids into their 3-hydroxyl metabolites. Exhibits reductive 3-beta-hydroxysteroid dehydrogenase activity toward 5-beta-androstanes, 5-beta-pregnanes, 4-pregnenes and bile acids. May also reduce endogenous and exogenous alpha-dicarbonyl compounds and xenobiotic alicyclic ketones. This Bos taurus (Bovine) protein is Dehydrogenase/reductase SDR family member 11 (DHRS11).